We begin with the raw amino-acid sequence, 267 residues long: Endonuclease NucS (267 aa).

The protein belongs to the NucS endonuclease family.

It is found in the cytoplasm. Cleaves both 3' and 5' ssDNA extremities of branched DNA structures. This Pyrococcus furiosus (strain ATCC 43587 / DSM 3638 / JCM 8422 / Vc1) protein is Endonuclease NucS.